The following is a 406-amino-acid chain: MSLIRVNGEAFKLSLESLEEDPFETKETLETLVKQTSVVLLAAGESRRFSQTIKKQWLRSNHTPLWLSVYESFKKALDFKEILLVVSELDYIYIKRHYPEIKLVKGGASRQESVRNALKIIDSAYTLTSDAARGLANIEALKSLFLTLQQTNHYCIAPYLPCYDTAIYYNEALDREAIKLIQTPQLSHTKTLQSALNQGDFKDESSAILQAFPNRVSYIEGSKNLHKLTTSDDLKHFAFFFNPAKDTFIGMGFDTHAFIKDKPMVLGGVVLDCEFGLKAHSDGDALLHAVIDAVLGAIKGGDIGEWFPDNDPKYKNASSKELLKVVLDFSQSIGFELLEMGATIFSEIPKITPYKPAILESLSQLLGLEKSQISLKATTMEKMGFIGKQEGLLVQAHVSMRYKQKL.

Positions 1-247 (MSLIRVNGEA…AFFFNPAKDT (247 aa)) are 2-C-methyl-D-erythritol 4-phosphate cytidylyltransferase. The tract at residues 248-406 (FIGMGFDTHA…HVSMRYKQKL (159 aa)) is 2-C-methyl-D-erythritol 2,4-cyclodiphosphate synthase. Residues aspartate 254 and histidine 256 each coordinate a divalent metal cation. Residues 254 to 256 (DTH) and 280 to 281 (HS) each bind 4-CDP-2-C-methyl-D-erythritol 2-phosphate. Residue histidine 288 participates in a divalent metal cation binding. 4-CDP-2-C-methyl-D-erythritol 2-phosphate contacts are provided by residues 302–304 (DIG), 307–311 (FPDND), 378–381 (TTME), phenylalanine 385, and lysine 388.

It in the N-terminal section; belongs to the IspD/TarI cytidylyltransferase family. IspD subfamily. This sequence in the C-terminal section; belongs to the IspF family. A divalent metal cation serves as cofactor.

The catalysed reaction is 2-C-methyl-D-erythritol 4-phosphate + CTP + H(+) = 4-CDP-2-C-methyl-D-erythritol + diphosphate. The enzyme catalyses 4-CDP-2-C-methyl-D-erythritol 2-phosphate = 2-C-methyl-D-erythritol 2,4-cyclic diphosphate + CMP. It functions in the pathway isoprenoid biosynthesis; isopentenyl diphosphate biosynthesis via DXP pathway; isopentenyl diphosphate from 1-deoxy-D-xylulose 5-phosphate: step 2/6. It participates in isoprenoid biosynthesis; isopentenyl diphosphate biosynthesis via DXP pathway; isopentenyl diphosphate from 1-deoxy-D-xylulose 5-phosphate: step 4/6. Functionally, bifunctional enzyme that catalyzes the formation of 4-diphosphocytidyl-2-C-methyl-D-erythritol from CTP and 2-C-methyl-D-erythritol 4-phosphate (MEP) (IspD), and catalyzes the conversion of 4-diphosphocytidyl-2-C-methyl-D-erythritol 2-phosphate (CDP-ME2P) to 2-C-methyl-D-erythritol 2,4-cyclodiphosphate (ME-CPP) with a corresponding release of cytidine 5-monophosphate (CMP) (IspF). This chain is Bifunctional enzyme IspD/IspF, found in Helicobacter pylori (strain G27).